Here is a 1119-residue protein sequence, read N- to C-terminus: Multiple epidermal growth factor-like domains protein 10 (1119 aa).

An N-terminal signal peptide occupies residues 1 to 22 (MMSSCGPLLLAVSCCLVALTSS). Residues 23-851 (LNLDDPNVCS…ALPMDSYQIG (829 aa)) lie on the Extracellular side of the membrane. Residues 27–104 (DPNVCSHWES…FYESGDICVP (78 aa)) enclose the EMI domain. 15 disulfides stabilise this stretch: Cys31–Cys92, Cys57–Cys66, Cys91–Cys102, Cys102–Cys115, Cys106–Cys121, Cys123–Cys132, Cys145–Cys157, Cys151–Cys164, Cys166–Cys175, Cys188–Cys200, Cys194–Cys207, Cys209–Cys218, Cys231–Cys243, Cys237–Cys250, and Cys252–Cys260. EGF-like domains lie at 98 to 133 (SGDICVPHCAEKCVHGRCVAPNTCQCEPGWGGADCS), 141 to 176 (WGPHCSSRCQCKNEALCNPITGACICAPGYHGWRCE), 184 to 219 (YGNNCQQKCLCQNNATCHHITGECVCSPGYTGAFCE), and 227 to 261 (HGQQCEERCPCQNGGVCHHVTGECSCPAGWGMVCG). N-linked (GlcNAc...) asparagine glycosylation is present at Asn197. The N-linked (GlcNAc...) asparagine glycan is linked to Asn272. EGF-like domains lie at 274–304 (SQECQCHNGGICSPSTGQCVCSSGYTGERCQ) and 312–347 (YGIGCSQACRCVNGAQCYHVSGACLCEQGYTGESCE). 6 disulfide bridges follow: Cys277-Cys285, Cys279-Cys292, Cys294-Cys303, Cys316-Cys328, Cys322-Cys335, and Cys337-Cys346. Asn369 and Asn393 each carry an N-linked (GlcNAc...) asparagine glycan. 9 EGF-like domains span residues 401–436 (YGEACQEVCRCQNGADCHSVSGECICAPGYKGSDCA), 444–479 (YGINCTSLCSCKNGAICSPIDGSCSCQAGWHGVDCS), 487–522 (WGLGCNLSCVCGNGGACNALDGKCTCTPGWRGDRCD), 573–608 (WGPNCSLSCNCKNSASCSPDEGACECAPGFRGTTCQ), 616–653 (FGHRCSQACPHCVHSNGPCHHVTGQCECLPGFKGALCN), 666–696 (GGSCTCTNNGTCSPMDGSCQCYPGWIGSDCS), 709–739 (IHTCNCHNGAFCSAYDGECKCTAGWTGLYCT), 747–782 (YGKDCVQACQCENGADCNHISGQCTCRTGFMGRHCE), and 795–825 (RQVCDCLNNSTCDHMTGTCYCNPGWKGTRCD). 3 cysteine pairs are disulfide-bonded: Cys405–Cys417, Cys411–Cys424, and Cys426–Cys435. A glycan (N-linked (GlcNAc...) asparagine) is linked at Asn447. Disulfide bonds link Cys448–Cys460, Cys454–Cys467, Cys469–Cys478, Cys491–Cys503, Cys497–Cys510, and Cys512–Cys521. Residue Asn492 is glycosylated (N-linked (GlcNAc...) asparagine). N-linked (GlcNAc...) asparagine glycosylation is present at Asn576. Cystine bridges form between Cys577–Cys589, Cys583–Cys596, Cys598–Cys607, Cys620–Cys634, Cys624–Cys641, Cys643–Cys652, Cys669–Cys677, Cys671–Cys684, Cys686–Cys695, Cys712–Cys720, Cys714–Cys727, Cys729–Cys738, Cys751–Cys763, Cys757–Cys770, Cys772–Cys781, Cys798–Cys806, Cys800–Cys813, and Cys815–Cys824. N-linked (GlcNAc...) asparagine glycosylation is present at Asn674. Residue Asn803 is glycosylated (N-linked (GlcNAc...) asparagine). A helical transmembrane segment spans residues 852–872 (AITGIIILVLLVLILLLLFII). The Cytoplasmic segment spans residues 873-1119 (YRKKQKGKES…SSPSPTEDSK (247 aa)).

The protein belongs to the MEGF family.

It localises to the cell membrane. Membrane receptor involved in phagocytosis by macrophages and astrocytes of apoptotic cells. Essential factor in the regulation of muscle development including myogenesis. Likely plays a key role in muscle cell proliferation, adhesion and motility. May control the balance between skeletal muscle satellite cells proliferation and differentiation through regulation of the notch signaling pathway. The polypeptide is Multiple epidermal growth factor-like domains protein 10 (Danio rerio (Zebrafish)).